Consider the following 151-residue polypeptide: Ribosome maturation factor RimP (151 aa).

Belongs to the RimP family.

It localises to the cytoplasm. In terms of biological role, required for maturation of 30S ribosomal subunits. The sequence is that of Ribosome maturation factor RimP from Thermoanaerobacter pseudethanolicus (strain ATCC 33223 / 39E) (Clostridium thermohydrosulfuricum).